The following is a 308-amino-acid chain: Acetylglutamate kinase (308 aa).

Substrate contacts are provided by residues 67–68, R89, and N193; that span reads GG.

It belongs to the acetylglutamate kinase family. ArgB subfamily.

It localises to the cytoplasm. It carries out the reaction N-acetyl-L-glutamate + ATP = N-acetyl-L-glutamyl 5-phosphate + ADP. Its pathway is amino-acid biosynthesis; L-arginine biosynthesis; N(2)-acetyl-L-ornithine from L-glutamate: step 2/4. Catalyzes the ATP-dependent phosphorylation of N-acetyl-L-glutamate. The chain is Acetylglutamate kinase from Nitratidesulfovibrio vulgaris (strain DP4) (Desulfovibrio vulgaris).